The primary structure comprises 235 residues: Large ribosomal subunit protein uL1 (235 aa).

Belongs to the universal ribosomal protein uL1 family. As to quaternary structure, part of the 50S ribosomal subunit.

Its function is as follows. Binds directly to 23S rRNA. The L1 stalk is quite mobile in the ribosome, and is involved in E site tRNA release. Protein L1 is also a translational repressor protein, it controls the translation of the L11 operon by binding to its mRNA. The protein is Large ribosomal subunit protein uL1 of Mycobacterium tuberculosis (strain ATCC 25177 / H37Ra).